A 382-amino-acid chain; its full sequence is Threonine synthase (382 aa).

Position 93 is an N6-(pyridoxal phosphate)lysine (Lys93). Pyridoxal 5'-phosphate-binding positions include Asn119, 219–223 (GNAGN), and Thr347.

The protein belongs to the threonine synthase family. It depends on pyridoxal 5'-phosphate as a cofactor.

It catalyses the reaction O-phospho-L-homoserine + H2O = L-threonine + phosphate. Its pathway is amino-acid biosynthesis; L-threonine biosynthesis; L-threonine from L-aspartate: step 5/5. In terms of biological role, catalyzes the gamma-elimination of phosphate from L-phosphohomoserine and the beta-addition of water to produce L-threonine. This is Threonine synthase (thrC) from Synechocystis sp. (strain ATCC 27184 / PCC 6803 / Kazusa).